Reading from the N-terminus, the 288-residue chain is General transcription factor IIE subunit 2 (288 aa).

The disordered stretch occupies residues 16–56 (ALTTPAVEKRPSASSESSKKKRAKLELSSTSGSKPSSDGSN). A compositionally biased stretch (low complexity) spans 41–56 (ELSSTSGSKPSSDGSN). Positions 63–143 (SLSGSSGYKF…YAFKPKYNLK (81 aa)) form a DNA-binding region, TFIIE beta.

Belongs to the TFIIE beta subunit family. In terms of assembly, tetramer of two alpha and two beta chains.

It is found in the nucleus. Recruits TFIIH to the initiation complex and stimulates the RNA polymerase II C-terminal domain kinase and DNA-dependent ATPase activities of TFIIH. Both TFIIH and TFIIE are required for promoter clearance by RNA polymerase. This Xenopus laevis (African clawed frog) protein is General transcription factor IIE subunit 2 (gtf2e2).